Consider the following 437-residue polypeptide: Adenylosuccinate lyase (437 aa).

N(6)-(1,2-dicarboxyethyl)-AMP-binding positions include 4-5 (RY), 70-72 (KHD), and 96-97 (TS). His-144 serves as the catalytic Proton donor/acceptor. Gln-215 provides a ligand contact to N(6)-(1,2-dicarboxyethyl)-AMP. Catalysis depends on Ser-265, which acts as the Proton donor/acceptor. N(6)-(1,2-dicarboxyethyl)-AMP contacts are provided by residues Ser-266, 271-273 (KKN), and 310-314 (SVERV).

It belongs to the lyase 1 family. Adenylosuccinate lyase subfamily. As to quaternary structure, homooligomer. Residues from neighboring subunits contribute catalytic and substrate-binding residues to each active site.

It catalyses the reaction N(6)-(1,2-dicarboxyethyl)-AMP = fumarate + AMP. The enzyme catalyses (2S)-2-[5-amino-1-(5-phospho-beta-D-ribosyl)imidazole-4-carboxamido]succinate = 5-amino-1-(5-phospho-beta-D-ribosyl)imidazole-4-carboxamide + fumarate. The protein operates within purine metabolism; AMP biosynthesis via de novo pathway; AMP from IMP: step 2/2. Its pathway is purine metabolism; IMP biosynthesis via de novo pathway; 5-amino-1-(5-phospho-D-ribosyl)imidazole-4-carboxamide from 5-amino-1-(5-phospho-D-ribosyl)imidazole-4-carboxylate: step 2/2. In terms of biological role, catalyzes two reactions in de novo purine nucleotide biosynthesis. Catalyzes the breakdown of 5-aminoimidazole- (N-succinylocarboxamide) ribotide (SAICAR or 2-[5-amino-1-(5-phospho-beta-D-ribosyl)imidazole-4-carboxamido]succinate) to 5-aminoimidazole-4-carboxamide ribotide (AICAR or 5-amino-1-(5-phospho-beta-D-ribosyl)imidazole-4-carboxamide) and fumarate, and of adenylosuccinate (ADS or N(6)-(1,2-dicarboxyethyl)-AMP) to adenosine monophosphate (AMP) and fumarate. The sequence is that of Adenylosuccinate lyase (purB) from Aquifex aeolicus (strain VF5).